A 289-amino-acid chain; its full sequence is ATP synthase gamma chain (289 aa).

This sequence belongs to the ATPase gamma chain family. F-type ATPases have 2 components, CF(1) - the catalytic core - and CF(0) - the membrane proton channel. CF(1) has five subunits: alpha(3), beta(3), gamma(1), delta(1), epsilon(1). CF(0) has three main subunits: a, b and c.

Its subcellular location is the cell inner membrane. Its function is as follows. Produces ATP from ADP in the presence of a proton gradient across the membrane. The gamma chain is believed to be important in regulating ATPase activity and the flow of protons through the CF(0) complex. The polypeptide is ATP synthase gamma chain (Janthinobacterium sp. (strain Marseille) (Minibacterium massiliensis)).